Reading from the N-terminus, the 842-residue chain is Molybdenum cofactor sulfurase (842 aa).

Residue Lys236 is modified to N6-(pyridoxal phosphate)lysine. Cys402 is a catalytic residue. Positions 637 to 680 are disordered; it reads PGSQHGDAQRSSKARLQKHQITTDQESDVQEVHPGSGTTTDSTW. In terms of domain architecture, MOSC spans 663–831; that stretch reads SDVQEVHPGS…AARGDVAYPT (169 aa).

The protein belongs to the class-V pyridoxal-phosphate-dependent aminotransferase family. MOCOS subfamily. Pyridoxal 5'-phosphate is required as a cofactor.

It catalyses the reaction Mo-molybdopterin + L-cysteine + AH2 = thio-Mo-molybdopterin + L-alanine + A + H2O. It participates in cofactor biosynthesis; molybdopterin biosynthesis. Functionally, sulfurates the molybdenum cofactor. Sulfation of molybdenum is essential for xanthine dehydrogenase (XDH) and aldehyde oxidase (ADO) enzymes in which molybdenum cofactor is liganded by 1 oxygen and 1 sulfur atom in active form. This is Molybdenum cofactor sulfurase from Pyricularia oryzae (strain 70-15 / ATCC MYA-4617 / FGSC 8958) (Rice blast fungus).